We begin with the raw amino-acid sequence, 102 residues long: ATP synthase subunit c (102 aa).

2 helical membrane-spanning segments follow: residues 34 to 54 and 80 to 100; these read IGAG…GYIF and AVSE…IFVA.

It belongs to the ATPase C chain family. F-type ATPases have 2 components, F(1) - the catalytic core - and F(0) - the membrane proton channel. F(1) has five subunits: alpha(3), beta(3), gamma(1), delta(1), epsilon(1). F(0) has three main subunits: a(1), b(2) and c(10-14). The alpha and beta chains form an alternating ring which encloses part of the gamma chain. F(1) is attached to F(0) by a central stalk formed by the gamma and epsilon chains, while a peripheral stalk is formed by the delta and b chains.

Its subcellular location is the cell membrane. Functionally, f(1)F(0) ATP synthase produces ATP from ADP in the presence of a proton or sodium gradient. F-type ATPases consist of two structural domains, F(1) containing the extramembraneous catalytic core and F(0) containing the membrane proton channel, linked together by a central stalk and a peripheral stalk. During catalysis, ATP synthesis in the catalytic domain of F(1) is coupled via a rotary mechanism of the central stalk subunits to proton translocation. Its function is as follows. Key component of the F(0) channel; it plays a direct role in translocation across the membrane. A homomeric c-ring of between 10-14 subunits forms the central stalk rotor element with the F(1) delta and epsilon subunits. This Mycoplasma genitalium (strain ATCC 33530 / DSM 19775 / NCTC 10195 / G37) (Mycoplasmoides genitalium) protein is ATP synthase subunit c.